A 609-amino-acid chain; its full sequence is Replication protein A 70 kDa DNA-binding subunit (609 aa).

Residues I112 to S164 are disordered. Residues P124–S151 are compositionally biased toward pro residues. The segment at residues W189–N273 is a DNA-binding region (OB). The segment at C472–C494 adopts a C4-type zinc-finger fold.

The protein belongs to the replication factor A protein 1 family. As to quaternary structure, component of the heterotrimeric canonical replication protein A complex (RPA). Interacts with rpain-a.

It is found in the nucleus. Its subcellular location is the PML body. Functionally, as part of the heterotrimeric replication protein A complex (RPA/RP-A), binds and stabilizes single-stranded DNA intermediates, that form during DNA replication or upon DNA stress. It prevents their reannealing and in parallel, recruits and activates different proteins and complexes involved in DNA metabolism. Thereby, it plays an essential role both in DNA replication and the cellular response to DNA damage. This Xenopus tropicalis (Western clawed frog) protein is Replication protein A 70 kDa DNA-binding subunit (rpa1).